We begin with the raw amino-acid sequence, 282 residues long: Bifunctional protein FolD (282 aa).

NADP(+)-binding positions include 162–164, serine 187, and valine 228; that span reads GRS.

It belongs to the tetrahydrofolate dehydrogenase/cyclohydrolase family. As to quaternary structure, homodimer.

The enzyme catalyses (6R)-5,10-methylene-5,6,7,8-tetrahydrofolate + NADP(+) = (6R)-5,10-methenyltetrahydrofolate + NADPH. The catalysed reaction is (6R)-5,10-methenyltetrahydrofolate + H2O = (6R)-10-formyltetrahydrofolate + H(+). It participates in one-carbon metabolism; tetrahydrofolate interconversion. Catalyzes the oxidation of 5,10-methylenetetrahydrofolate to 5,10-methenyltetrahydrofolate and then the hydrolysis of 5,10-methenyltetrahydrofolate to 10-formyltetrahydrofolate. This chain is Bifunctional protein FolD, found in Thermus thermophilus (strain ATCC 27634 / DSM 579 / HB8).